A 957-amino-acid chain; its full sequence is Valine--tRNA ligase (957 aa).

Positions 42-52 (PNVTGSLHMGH) match the 'HIGH' region motif. A 'KMSKS' region motif is present at residues 554-558 (KMSKS). Lys-557 contacts ATP. A coiled-coil region spans residues 890–956 (DKDAELARLA…LEAQQETIAA (67 aa)).

The protein belongs to the class-I aminoacyl-tRNA synthetase family. ValS type 1 subfamily. Monomer.

The protein resides in the cytoplasm. It catalyses the reaction tRNA(Val) + L-valine + ATP = L-valyl-tRNA(Val) + AMP + diphosphate. In terms of biological role, catalyzes the attachment of valine to tRNA(Val). As ValRS can inadvertently accommodate and process structurally similar amino acids such as threonine, to avoid such errors, it has a 'posttransfer' editing activity that hydrolyzes mischarged Thr-tRNA(Val) in a tRNA-dependent manner. The protein is Valine--tRNA ligase of Aliivibrio fischeri (strain ATCC 700601 / ES114) (Vibrio fischeri).